Here is a 159-residue protein sequence, read N- to C-terminus: Ribosomal RNA large subunit methyltransferase H (159 aa).

S-adenosyl-L-methionine-binding positions include Leu76, Gly108, and 127-132 (FGKMTL).

Belongs to the RNA methyltransferase RlmH family. Homodimer.

The protein localises to the cytoplasm. It carries out the reaction pseudouridine(1915) in 23S rRNA + S-adenosyl-L-methionine = N(3)-methylpseudouridine(1915) in 23S rRNA + S-adenosyl-L-homocysteine + H(+). Its function is as follows. Specifically methylates the pseudouridine at position 1915 (m3Psi1915) in 23S rRNA. This Lysinibacillus sphaericus (strain C3-41) protein is Ribosomal RNA large subunit methyltransferase H.